A 309-amino-acid chain; its full sequence is Succinate--CoA ligase [ADP-forming] subunit alpha-2, mitochondrial (309 aa).

Residues 1-9 constitute a hydrogenosome transit peptide; that stretch reads MLSSSFERN. Residues Lys-54 and 107-109 contribute to the CoA site; that span reads ITE. Tyr-171 is a binding site for substrate. Residue His-262 is the Tele-phosphohistidine intermediate of the active site.

The protein belongs to the succinate/malate CoA ligase alpha subunit family. As to quaternary structure, heterodimer of an alpha and a beta subunit.

The protein resides in the hydrogenosome lumen. The enzyme catalyses succinate + ATP + CoA = succinyl-CoA + ADP + phosphate. Its pathway is carbohydrate metabolism; tricarboxylic acid cycle; succinate from succinyl-CoA (ligase route): step 1/1. In terms of biological role, succinyl-CoA synthetase functions in the citric acid cycle (TCA), coupling the hydrolysis of succinyl-CoA to the synthesis of ATP and thus represents the only step of substrate-level phosphorylation in the TCA. The alpha subunit of the enzyme binds the substrates coenzyme A and phosphate, while succinate binding and nucleotide specificity is provided by the beta subunit. The polypeptide is Succinate--CoA ligase [ADP-forming] subunit alpha-2, mitochondrial (ALPHA-SCS2) (Trichomonas vaginalis).